Here is a 503-residue protein sequence, read N- to C-terminus: Nuclear respiratory factor 1 (503 aa).

The tract at residues 1–78 is dimerization; it reads MEEHGVTQTE…AHLAAAGPVG (78 aa). The disordered stretch occupies residues 36-57; it reads SMLSADEDSPSSPEDTSYDDSD. Residues serine 39, serine 44, serine 46, serine 47, and serine 52 each carry the phosphoserine; by CK2 modification. The Nuclear localization signal motif lies at 88–116; it reads GKKRKRPHVFESNPSIRKRQQTRLLRKLR. Residues 109–305 mediate DNA binding; the sequence is TRLLRKLRAT…SIAHLVPSQT (197 aa). A Glycyl lysine isopeptide (Lys-Gly) (interchain with G-Cter in SUMO2) cross-link involves residue lysine 139. A required for transcriptional activation region spans residues 301 to 476; it reads VPSQTVVQTF…AQGNGPVQVA (176 aa).

This sequence belongs to the NRF1/Ewg family. Homodimer. Binds DNA as a dimer. Interacts with PPRC1. Phosphorylation enhances DNA binding. As to expression, ubiquitously expressed with strongest expression in skeletal muscle.

The protein resides in the nucleus. Functionally, transcription factor that activates the expression of the EIF2S1 (EIF2-alpha) gene. Links the transcriptional modulation of key metabolic genes to cellular growth and development. Implicated in the control of nuclear genes required for respiration, heme biosynthesis, and mitochondrial DNA transcription and replication. The sequence is that of Nuclear respiratory factor 1 (NRF1) from Homo sapiens (Human).